The following is a 319-amino-acid chain: Ribosomal RNA large subunit methyltransferase F (319 aa).

This sequence belongs to the methyltransferase superfamily. METTL16/RlmF family.

It is found in the cytoplasm. The catalysed reaction is adenosine(1618) in 23S rRNA + S-adenosyl-L-methionine = N(6)-methyladenosine(1618) in 23S rRNA + S-adenosyl-L-homocysteine + H(+). Functionally, specifically methylates the adenine in position 1618 of 23S rRNA. This is Ribosomal RNA large subunit methyltransferase F from Aliivibrio fischeri (strain ATCC 700601 / ES114) (Vibrio fischeri).